We begin with the raw amino-acid sequence, 241 residues long: Demethylmenaquinone methyltransferase (241 aa).

S-adenosyl-L-methionine is bound by residues Thr60, Asp81, and 106 to 107 (DA).

Belongs to the class I-like SAM-binding methyltransferase superfamily. MenG/UbiE family.

The enzyme catalyses a 2-demethylmenaquinol + S-adenosyl-L-methionine = a menaquinol + S-adenosyl-L-homocysteine + H(+). It participates in quinol/quinone metabolism; menaquinone biosynthesis; menaquinol from 1,4-dihydroxy-2-naphthoate: step 2/2. Functionally, methyltransferase required for the conversion of demethylmenaquinol (DMKH2) to menaquinol (MKH2). In Staphylococcus aureus (strain Mu3 / ATCC 700698), this protein is Demethylmenaquinone methyltransferase.